The primary structure comprises 232 residues: Large ribosomal subunit protein uL1 (232 aa).

This sequence belongs to the universal ribosomal protein uL1 family. As to quaternary structure, part of the 50S ribosomal subunit.

Binds directly to 23S rRNA. The L1 stalk is quite mobile in the ribosome, and is involved in E site tRNA release. In terms of biological role, protein L1 is also a translational repressor protein, it controls the translation of the L11 operon by binding to its mRNA. The polypeptide is Large ribosomal subunit protein uL1 (Burkholderia ambifaria (strain MC40-6)).